We begin with the raw amino-acid sequence, 605 residues long: Protein DENND6A (605 aa).

The tract at residues 1–20 is disordered; that stretch reads MALPGPAVFGPGSRGSLDEA. The region spanning 60 to 239 is the uDENN domain; the sequence is HCVCVVGFDL…KVRIPTCHDK (180 aa). Serine 124 carries the post-translational modification Phosphoserine. In terms of domain architecture, cDENN spans 265–390; that stretch reads EVDLFRCFCP…VKVKKLKNLK (126 aa). Residues 392 to 525 form the dDENN domain; sequence LDSKPGVYTS…KTRRKEMTQK (134 aa). Lysine 507 is subject to N6-methyllysine.

Belongs to the DENND6 family.

Its subcellular location is the recycling endosome. It is found in the cytoplasm. Functionally, guanine nucleotide exchange factor (GEF) for RAB14. Component of an endocytic recycling pathway that is required for the control of ADAM10 transport, shedding of N-cadherin/CDH2 by ADAM9 or ADAM10 and regulation of cell-cell junctions. Required for RAB14 recruitment to recycling endosomes. This is Protein DENND6A (Dennd6a) from Mus musculus (Mouse).